We begin with the raw amino-acid sequence, 269 residues long: Dermonecrotic toxin SpeSicTox-betaIB3 (269 aa).

The active site involves H5. Residues E25 and D27 each contribute to the Mg(2+) site. Catalysis depends on H41, which acts as the Nucleophile. 2 cysteine pairs are disulfide-bonded: C45/C51 and C47/C191. Mg(2+) is bound at residue D85.

Belongs to the arthropod phospholipase D family. Class II subfamily. Mg(2+) is required as a cofactor. As to expression, expressed by the venom gland.

It is found in the secreted. The enzyme catalyses an N-(acyl)-sphingosylphosphocholine = an N-(acyl)-sphingosyl-1,3-cyclic phosphate + choline. It catalyses the reaction an N-(acyl)-sphingosylphosphoethanolamine = an N-(acyl)-sphingosyl-1,3-cyclic phosphate + ethanolamine. The catalysed reaction is a 1-acyl-sn-glycero-3-phosphocholine = a 1-acyl-sn-glycero-2,3-cyclic phosphate + choline. It carries out the reaction a 1-acyl-sn-glycero-3-phosphoethanolamine = a 1-acyl-sn-glycero-2,3-cyclic phosphate + ethanolamine. Functionally, dermonecrotic toxins cleave the phosphodiester linkage between the phosphate and headgroup of certain phospholipids (sphingolipid and lysolipid substrates), forming an alcohol (often choline) and a cyclic phosphate. This toxin acts on sphingomyelin (SM). It may also act on ceramide phosphoethanolamine (CPE), lysophosphatidylcholine (LPC) and lysophosphatidylethanolamine (LPE), but not on lysophosphatidylserine (LPS), and lysophosphatidylglycerol (LPG). It acts by transphosphatidylation, releasing exclusively cyclic phosphate products as second products. Induces dermonecrosis, hemolysis, increased vascular permeability, edema, inflammatory response, and platelet aggregation. This is Dermonecrotic toxin SpeSicTox-betaIB3 from Sicarius peruensis (Six-eyed sand spider).